Here is a 384-residue protein sequence, read N- to C-terminus: Alpha-2B adrenergic receptor (384 aa).

The chain crosses the membrane as a helical span at residues 1-25; it reads AIAAVTTFLILFTVFGNALVILAVL. The Cytoplasmic portion of the chain corresponds to 26-36; it reads TSRSLRAPQNL. A helical membrane pass occupies residues 37-62; that stretch reads FLVSLAAADILVATLIXPFSLANELL. The Extracellular portion of the chain corresponds to 63–72; it reads GYWYFWHTWC. An intrachain disulfide couples Cys72 to Cys151. A helical membrane pass occupies residues 73 to 95; sequence EVYLALXVLXCTSSIVHLCAISL. The Cytoplasmic segment spans residues 96 to 117; it reads DRYWAVSRALEYNSKRTPRRIX. Residues 118–140 traverse the membrane as a helical segment; sequence GIILTVWLIAAAISLPPLIYKGD. Topologically, residues 141 to 156 are extracellular; it reads QGPQPHGRPQCRLNQE. Residues 157 to 180 traverse the membrane as a helical segment; the sequence is AWYILSSSIGSFFAPCLIMILVYL. Residues 181–348 are Cytoplasmic-facing; the sequence is RIYLIAKRRN…LTREKRFTFV (168 aa). A disordered region spans residues 193–306; the sequence is GPRAQGASKG…SXGSPQLQQP (114 aa). Over residues 288 to 306 the composition is skewed to low complexity; the sequence is PEALPASPASXGSPQLQQP. A helical transmembrane segment spans residues 349–372; it reads LAVVIGVXVLCWFPFFXSYSLGAI. The Extracellular portion of the chain corresponds to 373–381; sequence CPQHCTVXH. A helical membrane pass occupies residues 382–384; that stretch reads GLF.

This sequence belongs to the G-protein coupled receptor 1 family. Adrenergic receptor subfamily. ADRA2B sub-subfamily. Interacts with RAB26. Interacts with PPP1R9B. Interacts with GGA1, GGA2 and GGA3.

The protein resides in the cell membrane. In terms of biological role, alpha-2 adrenergic receptors mediate the catecholamine-induced inhibition of adenylate cyclase through the action of G proteins. This chain is Alpha-2B adrenergic receptor (ADRA2B), found in Echinops telfairi (Lesser hedgehog tenrec).